We begin with the raw amino-acid sequence, 387 residues long: Chlorophyll synthase, chloroplastic (387 aa).

Residues 1–57 (MTSILNTVSTIHSSRVTSVDRVGVLSLRNSDSVEFTRRRSGFSTLIYESPGRRFVVR) constitute a chloroplast transit peptide. The tract at residues 62–81 (DTDKVKSQTPDKAPAGGSSI) is disordered. 7 helical membrane passes run 182–202 (VITQVWVLLLGGLGIAGILDV), 210–230 (TVFYLALGGSLLSYIYSAPPL), 241–261 (FALGASYISLPWWAGQALFGT), 266–286 (VVVLTLLYSIAGLGIAIVNDF), 311–331 (WICVGAIDITQLSVAGYLLAS), 336–356 (YALALVALIIPQIVFQFKYFL), and 364–384 (VKYQASAQPFLVLGIFVTALA).

It belongs to the UbiA prenyltransferase family. Chlorophyll synthase subfamily. As to expression, low level in flower buds, flowers, stems, leaves, greening cotyledons and immature siliques, but not in mature siliques or seeds.

It is found in the plastid. It localises to the chloroplast membrane. The catalysed reaction is phytyl diphosphate + chlorophyllide a + H(+) = chlorophyll a + diphosphate. It functions in the pathway porphyrin-containing compound metabolism; chlorophyll biosynthesis. Involved in one of the last steps of the biosynthesis of chlorophyll a. Catalyzes the esterification of chlorophillide a or b with a preference for geranylgeranyldiphosphate (GGPP) rather than for phytyldiphosphate (PhyPP). This chain is Chlorophyll synthase, chloroplastic (CHLG), found in Arabidopsis thaliana (Mouse-ear cress).